A 420-amino-acid chain; its full sequence is Histidine--tRNA ligase (420 aa).

Belongs to the class-II aminoacyl-tRNA synthetase family. As to quaternary structure, homodimer.

It is found in the cytoplasm. The catalysed reaction is tRNA(His) + L-histidine + ATP = L-histidyl-tRNA(His) + AMP + diphosphate + H(+). In Thermotoga sp. (strain RQ2), this protein is Histidine--tRNA ligase.